The chain runs to 132 residues: Spermatogenesis-associated protein 33 (132 aa).

The tract at residues 1 to 60 (MGQSKSKPREKKEEEKSTTTLVTKSKEKVMEKEAKQSDKESQPAESLLFATSKHSRPSSS) is interaction with ATG16L1. The interval 1–81 (MGQSKSKPRE…SKKRSVIPQI (81 aa)) is disordered. Positions 24–42 (KSKEKVMEKEAKQSDKESQ) are enriched in basic and acidic residues. The tract at residues 61–132 (SEDKPETKQR…IAAYDVHNTE (72 aa)) is interaction with VDAC2. A PQIIIT motif is present at residues 79 to 84 (PQIIIT). S87 is subject to Phosphoserine. The interval 110–132 (DWGPYHRHRSPSTIAAYDVHNTE) is disordered.

Interacts (via PQIIIT motif) with PPP3R2 and PPP3CC. Interacts with VDAC2. Interacts with ATG16L1 (via WD repeats). Interacts with PPP3R1, PPP3CA and PPP3CB. Predominantly expressed in the testis (at protein level). Expressed in the sperm midpiece (at protein level).

Its subcellular location is the cytoplasm. The protein localises to the cytosol. It localises to the nucleus. The protein resides in the mitochondrion. Functionally, plays an important role in sperm motility and male fertility. Required for sperm midpiece flexibility and for the localization of sperm calcineurin to the mitochondria. Promotes mitophagy as well as acts as an autophagy mediator in male germline cells. Links damaged mitochondria to autophagosomes via its binding to the outer mitochondrial membrane protein VDAC2, as well as to key autophagy machinery component ATG16L1. In Mus musculus (Mouse), this protein is Spermatogenesis-associated protein 33 (Spata33).